We begin with the raw amino-acid sequence, 195 residues long: Probable nicotinate-nucleotide adenylyltransferase (195 aa).

Belongs to the NadD family.

It catalyses the reaction nicotinate beta-D-ribonucleotide + ATP + H(+) = deamido-NAD(+) + diphosphate. It functions in the pathway cofactor biosynthesis; NAD(+) biosynthesis; deamido-NAD(+) from nicotinate D-ribonucleotide: step 1/1. Functionally, catalyzes the reversible adenylation of nicotinate mononucleotide (NaMN) to nicotinic acid adenine dinucleotide (NaAD). The protein is Probable nicotinate-nucleotide adenylyltransferase of Salinibacter ruber (strain DSM 13855 / M31).